Reading from the N-terminus, the 534-residue chain is Cytochrome P450 monooxygenase vrtK (534 aa).

Heme is bound at residue cysteine 448.

The protein belongs to the cytochrome P450 family. The cofactor is heme.

Its pathway is secondary metabolite biosynthesis; terpenoid biosynthesis. Cytochrome P450 monooxygenase; part of the gene cluster that mediates the biosynthesis of viridicatumtoxin, a tetracycline-like fungal meroterpenoid with a unique, fused spirobicyclic ring system. The first step of the pathway is the production of the malonamoyl-CoA starter unit for the polyketide synthase vrtA. The aldolase vrtJ may be involved in the synthesis of the malonamate substrate for malonamoyl-CoA synthetase vrtB. The polyketide synthase vrtA then may utilize the malonamoyl-CoA starter unit, followed by sequential condensation of eight malonyl-CoA units to form the polyketide backbone. The cyclization of the last ring could be mediated by the lactamase-like protein vrtG. The proposed post-PKS tailoring steps are a hydroxylation at C5 catalyzed the cytochrome P450 monooxygenase vrtE, a hydroxylation at C12a catalyzed by VrtH and/or VrtI, and an O-methylation by the O-methyltransferase vrtF. VrtC is then proposed to catalyze the transfer of a geranyl group synthesized by vrtD to the aromatic C ring of the tetracyclic polyketide intermediate of viridicatumtoxin to yield previridicatumtoxin. Finally, the cytochrome P450 monooxygenase vrtK catalyzes the spirocyclization of the geranyl moiety of previridicatumtoxin to afford viridicatumtoxin. The chain is Cytochrome P450 monooxygenase vrtK from Penicillium aethiopicum.